The following is a 683-amino-acid chain: Inositol-trisphosphate 3-kinase C (683 aa).

The disordered stretch occupies residues 1–124 (MRRCPCRGSL…PDRSSLRTHL (124 aa)). Residues 13–22 (AEAGALPAAA) show a composition bias toward low complexity. Gly residues predominate over residues 44–58 (PGAGAPAGRPEGGGP). Residues 105 to 124 (ETERPKQKTEPDRSSLRTHL) show a composition bias toward basic and acidic residues. Phosphoserine is present on residues Ser-127 and Ser-162. The segment at 147–308 (TDPHRSDLQF…EDGPLEEPEP (162 aa)) is disordered. A compositionally biased stretch (polar residues) spans 196–206 (WTHQNSSSLQT). Residues 249-259 (SQKKQDTEAAR) are compositionally biased toward basic and acidic residues. Over residues 267–289 (FQIQQDTDGSWTQPSTDGSQTAP) the composition is skewed to polar residues. Over residues 297–308 (EPEDGPLEEPEP) the composition is skewed to acidic residues. The short motif at 324-332 (LCPVPRLII) is the Nuclear export signal element. The tract at residues 334-387 (PETPEPEAQPVGPPSRVEGGSGGFSSASSFDESEDDVVAGGGGASDPEDRSGSK) is disordered. Thr-336 is subject to Phosphothreonine. Phosphoserine is present on Ser-404. ATP is bound by residues Lys-431, 471-473 (EDL), and Asp-484. Substrate is bound by residues Lys-486, 507-513 (RKDMYEK), and 534-541 (KPRYMQWR). Residues 509–517 (DMYEKMVAV) form a calmodulin-binding region. The ATP site is built by Lys-558 and Asp-638. Lys-641 lines the substrate pocket.

The protein belongs to the inositol phosphokinase (IPK) family. Highly expressed in pancreas, skeletal muscle, liver, placenta and weakly in kidney and brain.

Its subcellular location is the nucleus. The protein resides in the cytoplasm. The enzyme catalyses 1D-myo-inositol 1,4,5-trisphosphate + ATP = 1D-myo-inositol 1,3,4,5-tetrakisphosphate + ADP + H(+). With respect to regulation, activated by calcium/calmodulin. Inhibited by high concentrations of the substrate Ins(1,2,4)P3, and allosterically activated by the product Ins(1,3,4,5)P4. Its function is as follows. Catalyzes the phosphorylation of 1D-myo-inositol 1,4,5-trisphosphate (InsP3) into 1D-myo-inositol 1,3,4,5-tetrakisphosphate and participates to the regulation of calcium homeostasis. Can phosphorylate inositol 2,4,5-triphosphate to inositol 2,4,5,6-tetraphosphate. The chain is Inositol-trisphosphate 3-kinase C from Homo sapiens (Human).